The following is a 422-amino-acid chain: SVTEHFNVYKATRPYXXXCADCGDGYFCYSPVAIEKIRDEASDGMLKIQVSAQIGLDKAGTHAHTKLRYMAGHDVQESKRDSLRVYTSAACSIHGTMGHFIVAHCPPGDYLKVSFEDADSHVKACKVQYKHNPLPVGREKFVVRPHFGVELPCTSYQLTTAPTDEEIDMHTPPDIPDRTLLSQTAGNVKITAGGRTIRYNCTWGRDNVGTTSTDKTINACKIDQCHAAVTSHDKWQFTSPFVPRADQTARKGKVHVPFPLTNVTCRVPLARAPDVTYGKKEVTLRLHPDHPTLFSYRSLGAEPHPYEEWVDKFSERIIPVTEEGXEYQWGNNPPVRLWAXLTTEGKPHGWPHEIIQYYYGLYPAATIAAVSGXSLMALLTLAATCCMLATARRKCLTPYALTPGAVVPLTLGLXXCAPRANA.

Residues 1-359 (SVTEHFNVYK…WPHEIIQYYY (359 aa)) are Extracellular-facing. Asparagine 200 and asparagine 262 each carry an N-linked (GlcNAc...) asparagine; by host glycan. Residues 360–382 (GLYPAATIAAVSGXSLMALLTLA) form a helical membrane-spanning segment. The Cytoplasmic segment spans residues 383–422 (ATCCMLATARRKCLTPYALTPGAVVPLTLGLXXCAPRANA). Residues cysteine 385, cysteine 395, and cysteine 416 are each lipidated (S-palmitoyl cysteine; by host). A transient transmembrane before p62-6K protein processing region spans residues 395–415 (CLTPYALTPGAVVPLTLGLXX).

Spike glycoprotein E2: Processing of the precursor of protein E3/E2 into E2 and E3 results in a heterodimer of the spike glycoproteins E2 and E1. Spike glycoprotein E2: Spike at virion surface are constituted of three E2-E1 heterodimers. Spike glycoprotein E2: Interacts with 6K protein. Post-translationally, structural polyprotein: Specific enzymatic cleavages in vivo yield mature proteins. Capsid protein is auto-cleaved during polyprotein translation, unmasking a signal peptide at the N-terminus of the precursor of E3/E2. The remaining polyprotein is then targeted to the host endoplasmic reticulum, where host signal peptidase cleaves it into pE2, 6K and E1 proteins. pE2 is further processed to mature E3 and E2 by host furin in trans-Golgi vesicle. In terms of processing, spike glycoprotein E2: Palmitoylated via thioester bonds. These palmitoylations may induce disruption of the C-terminus transmembrane. This would result in the reorientation of E2 C-terminus from lumenal to cytoplasmic side. Spike glycoprotein E2: N-glycosylated.

The protein resides in the virion membrane. The protein localises to the host cell membrane. In terms of biological role, spike glycoprotein E2: Plays a role in viral attachment to target host cell, by binding to the cell receptor. Synthesized as a p62 precursor which is processed by furin at the cell membrane just before virion budding, giving rise to E2-E1 heterodimer. The p62-E1 heterodimer is stable, whereas E2-E1 is unstable and dissociate at low pH. p62 is processed at the last step, presumably to avoid E1 fusion activation before its final export to cell surface. E2 C-terminus contains a transitory transmembrane that would be disrupted by palmitoylation, resulting in reorientation of the C-terminal tail from lumenal to cytoplasmic side. This step is critical since E2 C-terminus is involved in budding by interacting with capsid proteins. This release of E2 C-terminus in cytoplasm occurs lately in protein export, and precludes premature assembly of particles at the endoplasmic reticulum membrane. The sequence is that of Structural polyprotein from Ross river virus (strain 213970) (RRV).